The primary structure comprises 772 residues: Carnitine O-palmitoyltransferase 1, muscle isoform (772 aa).

The Cytoplasmic segment spans residues 1–47 (MAEAHQAVAFQFTVTPDGVDFRLSREALKHVYLSGINSWKKRLIRIK). Residues 48 to 73 (NGILRGVYPGSPTSWLVVIMATVGSS) traverse the membrane as a helical segment. The Mitochondrial intermembrane portion of the chain corresponds to 74 to 102 (FCNVDISLGLVSCIQRCLPQGCGPYQTPQ). The helical transmembrane segment at 103–122 (TRALLSMAIFSTGVWVTGIF) threads the bilayer. Over 123–772 (FFRQTLKLLL…DLFQVPKAYS (650 aa)) the chain is Cytoplasmic. H473 (proton acceptor) is an active-site residue. Position 555 to 567 (555 to 567 (GKGLIKKCRTSPD)) interacts with CoA. Y589 and T602 together coordinate (R)-carnitine.

This sequence belongs to the carnitine/choline acetyltransferase family. Strong expression in heart and skeletal muscle. No expression in liver and kidney.

It localises to the mitochondrion outer membrane. It catalyses the reaction (R)-carnitine + hexadecanoyl-CoA = O-hexadecanoyl-(R)-carnitine + CoA. It participates in lipid metabolism; fatty acid beta-oxidation. Its function is as follows. Catalyzes the transfer of the acyl group of long-chain fatty acid-CoA conjugates onto carnitine, an essential step for the mitochondrial uptake of long-chain fatty acids and their subsequent beta-oxidation in the mitochondrion. The protein is Carnitine O-palmitoyltransferase 1, muscle isoform (CPT1B) of Homo sapiens (Human).